Here is a 252-residue protein sequence, read N- to C-terminus: Pantothenate synthetase (252 aa).

An ATP-binding site is contributed by 29–36 (MGNLHAGH). The active-site Proton donor is histidine 36. Glutamine 60 is a binding site for (R)-pantoate. A beta-alanine-binding site is contributed by glutamine 60. ATP is bound at residue 146–149 (GEKD). Residue glutamine 152 coordinates (R)-pantoate. ATP is bound by residues valine 175 and 183–186 (CSSR).

Belongs to the pantothenate synthetase family. Homodimer.

It is found in the cytoplasm. The catalysed reaction is (R)-pantoate + beta-alanine + ATP = (R)-pantothenate + AMP + diphosphate + H(+). Its pathway is cofactor biosynthesis; (R)-pantothenate biosynthesis; (R)-pantothenate from (R)-pantoate and beta-alanine: step 1/1. Catalyzes the condensation of pantoate with beta-alanine in an ATP-dependent reaction via a pantoyl-adenylate intermediate. The protein is Pantothenate synthetase of Legionella pneumophila (strain Lens).